We begin with the raw amino-acid sequence, 403 residues long: uncharacterized protein (403 aa).

The next 6 helical transmembrane spans lie at 31 to 51 (FLIA…IGSF), 186 to 206 (LPIG…GIIV), 238 to 258 (ISAV…PIII), 268 to 288 (LAIF…SLLC), 303 to 323 (LISP…TIMV), and 355 to 375 (LIEI…SFIL).

To B.subtilis YhaP.

Its subcellular location is the cell membrane. This is an uncharacterized protein from Methanocaldococcus jannaschii (strain ATCC 43067 / DSM 2661 / JAL-1 / JCM 10045 / NBRC 100440) (Methanococcus jannaschii).